Here is a 1208-residue protein sequence, read N- to C-terminus: Period circadian protein (1208 aa).

Disordered stretches follow at residues 1–171 and 214–235; these read MEGG…AAQS and GPGK…TGQR. Over residues 16-47 the composition is skewed to low complexity; sequence SDSAYSNSCSNSQSQRSGSSKSRLSGSHSSGS. The Nuclear localization signal motif lies at 66 to 79; it reads KRNKDKSRKKKKNK. Residues 66-79 show a composition bias toward basic residues; the sequence is KRNKDKSRKKKKNK. Composition is skewed to basic and acidic residues over residues 129 to 139 and 147 to 164; these read QHGEDHSEPKA and EGDR…ENAA. Over residues 217–232 the composition is skewed to low complexity; the sequence is KVEPVPGVPGTAAAGT. PAS domains follow at residues 242 to 377 and 395 to 501; these read ESFC…ATPI and FAIR…RVFQ. 4 disordered regions span residues 636 to 747, 802 to 821, 961 to 982, and 1076 to 1208; these read VTAP…SSNY, EYSG…WEGE, TSPT…EMPT, and VTTP…HGDG. Over residues 679–697 the composition is skewed to polar residues; sequence NFTTASNIHMSSVTNTSIA. 17 consecutive repeat copies span residues 698 to 699, 701 to 702, 703 to 704, 705 to 706, 707 to 708, 709 to 710, 711 to 712, 713 to 714, 715 to 716, 717 to 718, 719 to 720, 721 to 722, 723 to 724, 725 to 726, 727 to 728, 729 to 730, and 731 to 732. Positions 698–740 are enriched in gly residues; the sequence is GTGGTGTGTGTGTGTGTGTGTGTGTGTGTGTGTGNGTNSGTGT. The 21 X 2 AA approximate tandem repeats of G-[TN] stretch occupies residues 698–742; sequence GTGGTGTGTGTGTGTGTGTGTGTGTGTGTGTGTGNGTNSGTGTGS. An 18; approximate repeat occupies 734 to 735; it reads TN. A run of 2 repeats spans residues 737–738 and 739–740. The 21; approximate repeat unit spans residues 741–742; the sequence is GS. Low complexity predominate over residues 1076–1092; the sequence is VTTPSQVQRSSSQSASV. The segment covering 1127–1138 has biased composition (polar residues); that stretch reads LPCSSSNPANNK. Residues 1142–1161 show a composition bias toward low complexity; that stretch reads DSNGNSDDMDGSSFSSFYSS. Over residues 1193 to 1208 the composition is skewed to basic and acidic residues; the sequence is KIMEHPEEDQTQHGDG.

In terms of assembly, forms a heterodimer with timeless (TIM); the complex then translocates into the nucleus. Post-translationally, phosphorylated with a circadian rhythmicity, probably by the double-time protein (dbt). Phosphorylation could be implicated in the stability of per monomer and in the formation of heterodimer per-tim.

The protein resides in the nucleus. The protein localises to the cytoplasm. Its subcellular location is the perinuclear region. Functionally, essential for biological clock functions. Determines the period length of circadian and ultradian rhythms; an increase in PER dosage leads to shortened circadian rhythms and a decrease leads to lengthened circadian rhythms. Essential for the circadian rhythmicity of locomotor activity, eclosion behavior, and for the rhythmic component of the male courtship song that originates in the thoracic nervous system. The biological cycle depends on the rhythmic formation and nuclear localization of the TIM-PER complex. Light induces the degradation of TIM, which promotes elimination of PER. Nuclear activity of the heterodimer coordinatively regulates PER and TIM transcription through a negative feedback loop. Behaves as a negative element in circadian transcriptional loop. Does not appear to bind DNA, suggesting indirect transcriptional inhibition. The polypeptide is Period circadian protein (per) (Drosophila yakuba (Fruit fly)).